We begin with the raw amino-acid sequence, 262 residues long: Acyl-coenzyme A diphosphatase FITM2 (262 aa).

Residues 1–23 (MEHLERCEWLLRGTLVRAAVRRY) are Cytoplasmic-facing. A helical transmembrane segment spans residues 24–44 (LPWALVASMLAGSLLKELSPL). At 45–57 (PESYLSNKRNVLN) the chain is on the lumenal side. The chain crosses the membrane as a helical span at residues 58–78 (VYFVKVAWAWTFCLLLPFIAL). Residues 79–93 (TNYHLTGKAGLVLRR) lie on the Cytoplasmic side of the membrane. Residues 94 to 114 (LSTLLVGTAIWYICTSIFSNI) form a helical membrane-spanning segment. Over 115–145 (EHYTGSCYQSPALEGVRKEHQSKQQCHQEGG) the chain is Lumenal. Residues 146–166 (FWHGFDISGHSFLLTFCALMI) traverse the membrane as a helical segment. Residue His155 is part of the active site. Residues 167 to 190 (VEEMSVLHEVKTDRSHCLHTAITT) lie on the Cytoplasmic side of the membrane. The chain crosses the membrane as a helical span at residues 191–211 (LVVALGILTFIWVLMFLCTAV). The Lumenal portion of the chain corresponds to 212-218 (YFHNLSQ). Residue His214 is part of the active site. Residues 219–239 (KVFGTLFGLLSWYGTYGFWYP) form a helical membrane-spanning segment. At 240–262 (KAFSPGLPPQSCSLNLKQDSYKK) the chain is on the cytoplasmic side.

It belongs to the FIT family. FIT2 subfamily. Widely expressed.

It localises to the endoplasmic reticulum membrane. It catalyses the reaction an acyl-CoA + H2O = an acyl-4'-phosphopantetheine + adenosine 3',5'-bisphosphate + 2 H(+). The catalysed reaction is (9Z)-octadecenoyl-CoA + H2O = S-(9Z-octadecenoyl)-4'-phosphopantetheine + adenosine 3',5'-bisphosphate + 2 H(+). It carries out the reaction (5Z,8Z,11Z,14Z)-eicosatetraenoyl-CoA + H2O = S-(5Z,8Z,11Z,14Z-eicosatetraenoyl)-4'-phosphopantetheine + adenosine 3',5'-bisphosphate + 2 H(+). The enzyme catalyses hexadecanoyl-CoA + H2O = S-hexadecanoyl-4'-phosphopantetheine + adenosine 3',5'-bisphosphate + 2 H(+). Functionally, fatty acyl-coenzyme A (CoA) diphosphatase that hydrolyzes fatty acyl-CoA to yield acyl-4'-phosphopantetheine and adenosine 3',5'-bisphosphate. Preferentially hydrolyzes unsaturated long-chain acyl-CoA substrates such as oleoyl-CoA/(9Z)-octadecenoyl-CoA and arachidonoyl-CoA/(5Z,8Z,11Z,14Z)-eicosatetraenoyl-CoA in the endoplasmic reticulum (ER) lumen. This catalytic activity is required for maintaining ER structure and for lipid droplets (LDs) biogenesis, which are lipid storage organelles involved in maintaining lipid and energy homeostasis. Directly binds to diacylglycerol (DAGs) and triacylglycerol, which is also important for LD biogenesis. May support directional budding of nacent LDs from the ER into the cytosol by reducing DAG levels at sites of LD formation. Plays a role in the regulation of cell morphology and cytoskeletal organization. This Homo sapiens (Human) protein is Acyl-coenzyme A diphosphatase FITM2.